Reading from the N-terminus, the 436-residue chain is Trigger factor (436 aa).

A PPIase FKBP-type domain is found at 163 to 248 (GDRVTLDFAG…VKEVAEGVLP (86 aa)).

Belongs to the FKBP-type PPIase family. Tig subfamily.

It is found in the cytoplasm. The catalysed reaction is [protein]-peptidylproline (omega=180) = [protein]-peptidylproline (omega=0). Functionally, involved in protein export. Acts as a chaperone by maintaining the newly synthesized protein in an open conformation. Functions as a peptidyl-prolyl cis-trans isomerase. This Bordetella petrii (strain ATCC BAA-461 / DSM 12804 / CCUG 43448) protein is Trigger factor.